The primary structure comprises 204 residues: Sec-independent protein translocase protein TatB (204 aa).

The chain crosses the membrane as a helical span at residues 1-21 (MFDIGFSELLLIFIVGLVVLG). The span at 154–166 (VVSSVDSIQNGQS) shows a compositional bias: polar residues. Residues 154 to 204 (VVSSVDSIQNGQSDLELDAQAEVDRQLAAMMDKYAPPDDVAENPISTEKTS) form a disordered region.

Belongs to the TatB family. The Tat system comprises two distinct complexes: a TatABC complex, containing multiple copies of TatA, TatB and TatC subunits, and a separate TatA complex, containing only TatA subunits. Substrates initially bind to the TatABC complex, which probably triggers association of the separate TatA complex to form the active translocon.

It is found in the cell inner membrane. Its function is as follows. Part of the twin-arginine translocation (Tat) system that transports large folded proteins containing a characteristic twin-arginine motif in their signal peptide across membranes. Together with TatC, TatB is part of a receptor directly interacting with Tat signal peptides. TatB may form an oligomeric binding site that transiently accommodates folded Tat precursor proteins before their translocation. The sequence is that of Sec-independent protein translocase protein TatB from Mannheimia succiniciproducens (strain KCTC 0769BP / MBEL55E).